The following is a 607-amino-acid chain: Guanine nucleotide-binding protein-like 1 (607 aa).

A compositionally biased stretch (basic residues) spans 1–14 (MPRKKPFSVKQKKK). Positions 1-81 (MPRKKPFSVK…GPRGYDPNRY (81 aa)) are disordered. The segment covering 15 to 26 (QLQDKRERKRGL) has biased composition (basic and acidic residues). S32, S33, and S34 each carry phosphoserine. T48 and T50 each carry phosphothreonine. Phosphoserine occurs at positions 51 and 68. Positions 178–418 (WRQLWRVLEM…LCDCPGLIFP (241 aa)) constitute a CP-type G domain. 225-228 (NKVD) serves as a coordination point for GTP. S324 bears the Phosphoserine mark. GTP is bound by residues 367 to 374 (GFPNVGKS) and 411 to 415 (DCPGL). The disordered stretch occupies residues 544-607 (GRVGPAGDEE…PYALLGEGEC (64 aa)). Residues 550 to 585 (GDEEEEEEEELSSSCEEEGEEDRDADEEGEGDEDTP) are compositionally biased toward acidic residues. 3 positions are modified to phosphoserine: S561, S562, and S563.

The protein belongs to the TRAFAC class YlqF/YawG GTPase family.

Its function is as follows. Possible regulatory or functional link with the histocompatibility cluster. This is Guanine nucleotide-binding protein-like 1 (Gnl1) from Rattus norvegicus (Rat).